The sequence spans 180 residues: Peptide deformylase (180 aa).

Residues Cys88 and His130 each coordinate Fe cation. The active site involves Glu131. A Fe cation-binding site is contributed by His134.

This sequence belongs to the polypeptide deformylase family. Requires Fe(2+) as cofactor.

The enzyme catalyses N-terminal N-formyl-L-methionyl-[peptide] + H2O = N-terminal L-methionyl-[peptide] + formate. Functionally, removes the formyl group from the N-terminal Met of newly synthesized proteins. Requires at least a dipeptide for an efficient rate of reaction. N-terminal L-methionine is a prerequisite for activity but the enzyme has broad specificity at other positions. This is Peptide deformylase from Acidothermus cellulolyticus (strain ATCC 43068 / DSM 8971 / 11B).